The chain runs to 372 residues: Glutamate 5-kinase (372 aa).

Lysine 14 is a binding site for ATP. Residues serine 54, aspartate 141, and asparagine 153 each contribute to the substrate site. 173–174 contributes to the ATP binding site; that stretch reads TD. One can recognise a PUA domain in the interval 280–358; sequence RGTVVIDDGA…SQIESLLGYS (79 aa).

The protein belongs to the glutamate 5-kinase family.

It is found in the cytoplasm. The catalysed reaction is L-glutamate + ATP = L-glutamyl 5-phosphate + ADP. It functions in the pathway amino-acid biosynthesis; L-proline biosynthesis; L-glutamate 5-semialdehyde from L-glutamate: step 1/2. Its function is as follows. Catalyzes the transfer of a phosphate group to glutamate to form L-glutamate 5-phosphate. The polypeptide is Glutamate 5-kinase (Methylibium petroleiphilum (strain ATCC BAA-1232 / LMG 22953 / PM1)).